The following is a 123-amino-acid chain: Galanin peptides (123 aa).

The N-terminal stretch at 1–19 is a signal peptide; that stretch reads MARGSALLLASLLLAAALS. A propeptide spanning residues 20-30 is cleaved from the precursor; the sequence is ASAGLWSPAKE. A disordered region spans residues 46 to 80; sequence HAVGNHRSFSDKNGLTSKRELRPEDDMKPGSFDRS. Over residues 62 to 73 the composition is skewed to basic and acidic residues; it reads SKRELRPEDDMK. A phosphoserine mark is found at Ser-116 and Ser-117.

Belongs to the galanin family.

The protein localises to the secreted. In terms of biological role, endocrine hormone of the central and peripheral nervous systems that binds and activates the G protein-coupled receptors GALR1, GALR2, and GALR3. This small neuropeptide may regulate diverse physiologic functions including contraction of smooth muscle of the gastrointestinal and genitourinary tract, growth hormone and insulin release and adrenal secretion. The polypeptide is Galanin peptides (GAL) (Homo sapiens (Human)).